Reading from the N-terminus, the 427-residue chain is Pre-mRNA-splicing factor PRP46 (427 aa).

WD repeat units lie at residues glycine 113–threonine 153, alanine 156–asparagine 195, glycine 198–threonine 237, glycine 240–threonine 281, histidine 283–valine 322, glutamine 324–threonine 362, and glutamate 373–threonine 412. The segment at glutamine 404–leucine 427 is disordered.

The protein belongs to the WD repeat PRL1/PRL2 family. In terms of assembly, associated with the spliceosome.

The protein resides in the cytoplasm. It is found in the nucleus. Functionally, involved in pre-mRNA splicing and required for cell cycle progression at G2/M. This Candida glabrata (strain ATCC 2001 / BCRC 20586 / JCM 3761 / NBRC 0622 / NRRL Y-65 / CBS 138) (Yeast) protein is Pre-mRNA-splicing factor PRP46 (PRP46).